The primary structure comprises 90 residues: Small ribosomal subunit protein uS15 (90 aa).

It belongs to the universal ribosomal protein uS15 family. As to quaternary structure, part of the 30S ribosomal subunit. Forms a bridge to the 50S subunit in the 70S ribosome, contacting the 23S rRNA.

Its function is as follows. One of the primary rRNA binding proteins, it binds directly to 16S rRNA where it helps nucleate assembly of the platform of the 30S subunit by binding and bridging several RNA helices of the 16S rRNA. Forms an intersubunit bridge (bridge B4) with the 23S rRNA of the 50S subunit in the ribosome. The protein is Small ribosomal subunit protein uS15 of Aliarcobacter butzleri (strain RM4018) (Arcobacter butzleri).